The primary structure comprises 440 residues: Xaa-Pro dipeptidase (440 aa).

Positions 244, 255, 335, 380, and 419 each coordinate Mn(2+).

This sequence belongs to the peptidase M24B family. Bacterial-type prolidase subfamily. Mn(2+) is required as a cofactor.

It carries out the reaction Xaa-L-Pro dipeptide + H2O = an L-alpha-amino acid + L-proline. Splits dipeptides with a prolyl residue in the C-terminal position. The sequence is that of Xaa-Pro dipeptidase from Shewanella baltica (strain OS185).